A 278-amino-acid polypeptide reads, in one-letter code: 3-methyl-2-oxobutanoate hydroxymethyltransferase (278 aa).

The Mg(2+) site is built by Asp49 and Asp88. Residues 49–50 (DS), Asp88, and Lys118 contribute to the 3-methyl-2-oxobutanoate site. Glu120 lines the Mg(2+) pocket. Glu186 serves as the catalytic Proton acceptor.

The protein belongs to the PanB family. In terms of assembly, homodecamer; pentamer of dimers. Mg(2+) is required as a cofactor.

Its subcellular location is the cytoplasm. It catalyses the reaction 3-methyl-2-oxobutanoate + (6R)-5,10-methylene-5,6,7,8-tetrahydrofolate + H2O = 2-dehydropantoate + (6S)-5,6,7,8-tetrahydrofolate. Its pathway is cofactor biosynthesis; (R)-pantothenate biosynthesis; (R)-pantoate from 3-methyl-2-oxobutanoate: step 1/2. Its function is as follows. Catalyzes the reversible reaction in which hydroxymethyl group from 5,10-methylenetetrahydrofolate is transferred onto alpha-ketoisovalerate to form ketopantoate. The polypeptide is 3-methyl-2-oxobutanoate hydroxymethyltransferase (Bordetella parapertussis (strain 12822 / ATCC BAA-587 / NCTC 13253)).